The following is a 103-amino-acid chain: MNLNKYETIYILQPNITESENLILINEYKALIKKYGGNNIVVQHKGRRHLNYNIKSYYDGIYVQINYTASSNLVRILEKAMRLSQHVIRYMTIKNCHMNDIKI.

Belongs to the bacterial ribosomal protein bS6 family.

The protein localises to the plastid. The protein resides in the chloroplast. Binds together with bS18 to 16S ribosomal RNA. This chain is Small ribosomal subunit protein bS6c, found in Gracilaria tenuistipitata var. liui (Red alga).